The primary structure comprises 236 residues: 2-C-methyl-D-erythritol 4-phosphate cytidylyltransferase (236 aa).

The protein belongs to the IspD/TarI cytidylyltransferase family. IspD subfamily. As to quaternary structure, homodimer.

It catalyses the reaction 2-C-methyl-D-erythritol 4-phosphate + CTP + H(+) = 4-CDP-2-C-methyl-D-erythritol + diphosphate. It participates in isoprenoid biosynthesis; isopentenyl diphosphate biosynthesis via DXP pathway; isopentenyl diphosphate from 1-deoxy-D-xylulose 5-phosphate: step 2/6. Functionally, catalyzes the formation of 4-diphosphocytidyl-2-C-methyl-D-erythritol from CTP and 2-C-methyl-D-erythritol 4-phosphate (MEP). The sequence is that of 2-C-methyl-D-erythritol 4-phosphate cytidylyltransferase from Escherichia coli O17:K52:H18 (strain UMN026 / ExPEC).